Here is a 345-residue protein sequence, read N- to C-terminus: Ninja-family protein AFP1 (345 aa).

Disordered regions lie at residues 114–185 (TSLP…ATAN) and 201–256 (QVSG…RRLS). Basic and acidic residues-rich tracts occupy residues 123–132 (EWRKRKEMQT) and 222–232 (LETKASSDEAR). Low complexity predominate over residues 235–249 (PSTTQPQQETTTKPT).

This sequence belongs to the Ninja family. In terms of assembly, forms a heterodimer with AFP2. Interacts with ABI5/DPBF1, DPBF2, AREB3/DPBF3, ABF1, ABF3/DPBF5 and ABF4/AREB2.

The protein localises to the nucleus. Acts as a negative regulator of abscisic acid (ABA) response during germination through the ubiquitin-mediated proteolysis of ABI5/DPBF1. The sequence is that of Ninja-family protein AFP1 (AFP1) from Arabidopsis thaliana (Mouse-ear cress).